Reading from the N-terminus, the 337-residue chain is Manganese-dependent ADP-ribose/CDP-alcohol diphosphatase (337 aa).

Position 1 is an N-acetylmethionine (Met1). Asp25, Gln27, Asp74, Asn110, His241, His278, and His280 together coordinate Zn(2+).

This sequence belongs to the ADPRibase-Mn family. Monomer. Mg(2+) is required as a cofactor.

It catalyses the reaction CDP-choline + H2O = phosphocholine + CMP + 2 H(+). The catalysed reaction is ADP-D-ribose + H2O = D-ribose 5-phosphate + AMP + 2 H(+). The enzyme catalyses CDP-glycerol + H2O = sn-glycerol 3-phosphate + CMP + 2 H(+). Hydrolyzes ADP-ribose, IDP-ribose, CDP-glycerol, CDP-choline and CDP-ethanolamine, but not other non-reducing ADP-sugars or CDP-glucose. May be involved in immune cell signaling as suggested by the second-messenger role of ADP-ribose, which activates TRPM2 as a mediator of oxidative/nitrosative stress. The sequence is that of Manganese-dependent ADP-ribose/CDP-alcohol diphosphatase (ADPRM) from Bos taurus (Bovine).